Reading from the N-terminus, the 330-residue chain is DNA-directed RNA polymerase subunit alpha (330 aa).

The interval 1-236 (MQGSVTEFLK…EQLDAFVDLR (236 aa)) is alpha N-terminal domain (alpha-NTD). The segment at 250 to 330 (FDPILLRPVD…NWPPASIAED (81 aa)) is alpha C-terminal domain (alpha-CTD).

The protein belongs to the RNA polymerase alpha chain family. In terms of assembly, homodimer. The RNAP catalytic core consists of 2 alpha, 1 beta, 1 beta' and 1 omega subunit. When a sigma factor is associated with the core the holoenzyme is formed, which can initiate transcription.

The catalysed reaction is RNA(n) + a ribonucleoside 5'-triphosphate = RNA(n+1) + diphosphate. DNA-dependent RNA polymerase catalyzes the transcription of DNA into RNA using the four ribonucleoside triphosphates as substrates. The protein is DNA-directed RNA polymerase subunit alpha of Vibrio atlanticus (strain LGP32) (Vibrio splendidus (strain Mel32)).